Here is a 115-residue protein sequence, read N- to C-terminus: Large ribosomal subunit protein bL20 (115 aa).

This sequence belongs to the bacterial ribosomal protein bL20 family.

Its function is as follows. Binds directly to 23S ribosomal RNA and is necessary for the in vitro assembly process of the 50S ribosomal subunit. It is not involved in the protein synthesizing functions of that subunit. This chain is Large ribosomal subunit protein bL20, found in Synechococcus sp. (strain CC9902).